Here is a 393-residue protein sequence, read N- to C-terminus: Small ribosomal subunit protein bS1 (393 aa).

4 consecutive S1 motif domains span residues 16 to 90, 108 to 173, 194 to 262, and 279 to 348; these read GDKV…LSKR, NQTI…LSRK, and GDVI…LSIK. Positions 356 to 369 are enriched in polar residues; sequence VIESDSETTQSYLD. The tract at residues 356-381 is disordered; that stretch reads VIESDSETTQSYLDNGSDDEDNPTLG.

Belongs to the bacterial ribosomal protein bS1 family.

Its function is as follows. Binds mRNA; thus facilitating recognition of the initiation point. It is needed to translate mRNA with a short Shine-Dalgarno (SD) purine-rich sequence. The sequence is that of Small ribosomal subunit protein bS1 (rpsA) from Staphylococcus saprophyticus subsp. saprophyticus (strain ATCC 15305 / DSM 20229 / NCIMB 8711 / NCTC 7292 / S-41).